We begin with the raw amino-acid sequence, 537 residues long: ATP synthase subunit alpha (537 aa).

171–178 (GDRQTGKT) serves as a coordination point for ATP.

This sequence belongs to the ATPase alpha/beta chains family. F-type ATPases have 2 components, CF(1) - the catalytic core - and CF(0) - the membrane proton channel. CF(1) has five subunits: alpha(3), beta(3), gamma(1), delta(1), epsilon(1). CF(0) has four main subunits: a, b, b' and c.

The protein localises to the cell inner membrane. The catalysed reaction is ATP + H2O + 4 H(+)(in) = ADP + phosphate + 5 H(+)(out). Functionally, produces ATP from ADP in the presence of a proton gradient across the membrane. The alpha chain is a regulatory subunit. The protein is ATP synthase subunit alpha of Chloroherpeton thalassium (strain ATCC 35110 / GB-78).